Here is a 110-residue protein sequence, read N- to C-terminus: Large ribosomal subunit protein uL22 (110 aa).

Belongs to the universal ribosomal protein uL22 family. Part of the 50S ribosomal subunit.

Functionally, this protein binds specifically to 23S rRNA; its binding is stimulated by other ribosomal proteins, e.g. L4, L17, and L20. It is important during the early stages of 50S assembly. It makes multiple contacts with different domains of the 23S rRNA in the assembled 50S subunit and ribosome. The globular domain of the protein is located near the polypeptide exit tunnel on the outside of the subunit, while an extended beta-hairpin is found that lines the wall of the exit tunnel in the center of the 70S ribosome. This chain is Large ribosomal subunit protein uL22, found in Leptospira borgpetersenii serovar Hardjo-bovis (strain JB197).